Here is a 138-residue protein sequence, read N- to C-terminus: Superoxide dismutase [Mn] (138 aa).

Residues Q1, H49, D133, and H137 each coordinate Mn(2+).

This sequence belongs to the iron/manganese superoxide dismutase family. It depends on Mn(2+) as a cofactor.

It catalyses the reaction 2 superoxide + 2 H(+) = H2O2 + O2. Functionally, destroys superoxide anion radicals which are normally produced within the cells and which are toxic to biological systems. This chain is Superoxide dismutase [Mn] (sodA), found in Mycobacteroides chelonae (Mycobacterium chelonae).